A 475-amino-acid chain; its full sequence is tRNA modification GTPase MnmE (475 aa).

(6S)-5-formyl-5,6,7,8-tetrahydrofolate-binding residues include Arg-24, Glu-81, and Lys-124. A TrmE-type G domain is found at 220-397 (GLSVVLAGQP…LRKELLRLVG (178 aa)). Asn-230 is a K(+) binding site. GTP-binding positions include 230-235 (NVGKSS), 249-255 (TPIAGTT), 274-277 (DTAG), and 378-380 (SAR). Ser-234 serves as a coordination point for Mg(2+). Thr-249, Ile-251, and Thr-254 together coordinate K(+). Thr-255 contacts Mg(2+). Lys-475 provides a ligand contact to (6S)-5-formyl-5,6,7,8-tetrahydrofolate.

This sequence belongs to the TRAFAC class TrmE-Era-EngA-EngB-Septin-like GTPase superfamily. TrmE GTPase family. As to quaternary structure, homodimer. Heterotetramer of two MnmE and two MnmG subunits. K(+) is required as a cofactor.

The protein localises to the cytoplasm. Its function is as follows. Exhibits a very high intrinsic GTPase hydrolysis rate. Involved in the addition of a carboxymethylaminomethyl (cmnm) group at the wobble position (U34) of certain tRNAs, forming tRNA-cmnm(5)s(2)U34. This is tRNA modification GTPase MnmE from Cupriavidus pinatubonensis (strain JMP 134 / LMG 1197) (Cupriavidus necator (strain JMP 134)).